Reading from the N-terminus, the 155-residue chain is 3-dehydroquinate dehydratase (155 aa).

Tyr32 serves as the catalytic Proton acceptor. Residues Asn84, His90, and Asp97 each contribute to the substrate site. The Proton donor role is filled by His110. Substrate-binding positions include 111–112 (LS) and Arg121.

Belongs to the type-II 3-dehydroquinase family. In terms of assembly, homododecamer.

It carries out the reaction 3-dehydroquinate = 3-dehydroshikimate + H2O. It functions in the pathway metabolic intermediate biosynthesis; chorismate biosynthesis; chorismate from D-erythrose 4-phosphate and phosphoenolpyruvate: step 3/7. Functionally, catalyzes a trans-dehydration via an enolate intermediate. This chain is 3-dehydroquinate dehydratase, found in Ralstonia pickettii (strain 12J).